Reading from the N-terminus, the 330-residue chain is Glycerol-3-phosphate dehydrogenase [NAD(P)+] (330 aa).

Positions 11, 12, 32, and 106 each coordinate NADPH. 3 residues coordinate sn-glycerol 3-phosphate: lysine 106, glycine 133, and serine 135. Alanine 137 provides a ligand contact to NADPH. Lysine 188, aspartate 241, serine 251, arginine 252, and asparagine 253 together coordinate sn-glycerol 3-phosphate. Lysine 188 functions as the Proton acceptor in the catalytic mechanism. Arginine 252 serves as a coordination point for NADPH. 2 residues coordinate NADPH: valine 276 and glutamate 278.

It belongs to the NAD-dependent glycerol-3-phosphate dehydrogenase family.

It is found in the cytoplasm. The enzyme catalyses sn-glycerol 3-phosphate + NAD(+) = dihydroxyacetone phosphate + NADH + H(+). It catalyses the reaction sn-glycerol 3-phosphate + NADP(+) = dihydroxyacetone phosphate + NADPH + H(+). It functions in the pathway membrane lipid metabolism; glycerophospholipid metabolism. Functionally, catalyzes the reduction of the glycolytic intermediate dihydroxyacetone phosphate (DHAP) to sn-glycerol 3-phosphate (G3P), the key precursor for phospholipid synthesis. This chain is Glycerol-3-phosphate dehydrogenase [NAD(P)+], found in Clostridium botulinum (strain Alaska E43 / Type E3).